A 467-amino-acid polypeptide reads, in one-letter code: Serine/threonine-protein kinase US3 homolog (467 aa).

The tract at residues 64–155 is disordered; it reads GPEVAPPART…PAGGVTREEA (92 aa). The segment covering 99 to 111 has biased composition (basic and acidic residues); it reads NERRAATGDEKES. A compositionally biased stretch (acidic residues) spans 117 to 144; sequence NESESESESESESESGADDGDWDDDDDA. The 299-residue stretch at 164–462 folds into the Protein kinase domain; it reads FRIIRRLTPG…AAELLEHPVF (299 aa). ATP-binding positions include 170–178 and lysine 194; that span reads LTPGSEGRV. Aspartate 279 functions as the Proton acceptor in the catalytic mechanism.

It belongs to the protein kinase superfamily. Ser/Thr protein kinase family. Phosphorylated by UL13 homolog; this phosphorylation regulates subsequent phosphorylation of UL31 and UL34 homologs by US3. Autophosphorylated.

It is found in the host cytoplasm. The protein resides in the host nucleus. The catalysed reaction is L-seryl-[protein] + ATP = O-phospho-L-seryl-[protein] + ADP + H(+). It carries out the reaction L-threonyl-[protein] + ATP = O-phospho-L-threonyl-[protein] + ADP + H(+). Functionally, multifunctional serine/threonine kinase that plays a role in several processes including egress of virus particles from the nucleus, modulation of the actin cytoskeleton and inhibition of apoptosis. Phosphorylates UL31 and UL34 homologs, two critical regulators of capsid budding from nucleus to endoplasmic reticulum, thereby facilitating virion egress. Modulates and redistributes host components of the nuclear envelope, including LMNA, emerin/EMD and the nuclear matrix protein MATR3. Phosphorylates envelope glycoprotein B (gB), probably to direct it to the cell surface. Promotes virus intracellular spread by restructuring host cell cytoskeleton. Blocks host apoptosis to extend cell survival and allow efficient viral replication. Promotes viral gene expression by phosphorylating host HDAC2 to reduce viral genome silencing. This chain is Serine/threonine-protein kinase US3 homolog, found in Bos taurus (Bovine).